The following is a 1462-amino-acid chain: Nuclear pore complex protein Nup153 (1462 aa).

Copy 1 of the repeat occupies 237-238 (FG). The tract at residues 237–1405 (FGTLSTSLGN…NNPSGVFTFG (1169 aa)) is 29 X 2 AA repeats of F-G. Lys-354 is covalently cross-linked (Glycyl lysine isopeptide (Lys-Gly) (interchain with G-Cter in SUMO2)). Repeat 2 spans residues 648-649 (YG). Residues 653–683 (KAGSSWQCDTCLLQNKVTDNKCIACQAAKLP) form a RanBP2-type 1 zinc finger. Residues Cys-660, Cys-663, Cys-674, and Cys-677 each coordinate Zn(2+). The stretch at 710–711 (FG) is repeat 3. The segment at 717–746 (AIGTWDCDTCLVQNKPEAVKCVACETPKPG) adopts a RanBP2-type 2 zinc-finger fold. 4 residues coordinate Zn(2+): Cys-723, Cys-726, Cys-737, and Cys-740. Residues 778-779 (FG) form repeat 4. 2 consecutive RanBP2-type zinc fingers follow at residues 785–814 (PVGS…EKPG) and 842–871 (PEGS…AKPG). Zn(2+)-binding residues include Cys-791, Cys-794, Cys-805, Cys-808, Cys-848, Cys-851, Cys-862, and Cys-865. Tandem repeats lie at residues 894–895 (FG), 915–916 (FG), 950–951 (FG), 972–973 (FG), 989–990 (FG), 1013–1014 (FG), 1073–1074 (FG), 1107–1108 (FG), 1124–1125 (FG), 1161–1162 (FG), 1200–1201 (FG), 1216–1217 (FG), 1228–1229 (FG), 1263–1264 (FG), 1276–1277 (FT), 1278–1279 (FG), 1293–1294 (FG), 1306–1307 (FG), 1314–1315 (FG), 1328–1329 (FG), 1350–1351 (FG), 1362–1363 (FG), 1371–1372 (FG), 1384–1385 (FG), and 1404–1405 (FG).

This sequence belongs to the NUP153 family. As to quaternary structure, part of the nuclear pore complex (NPC). Interacts with TPR (via coiled coil region); the interaction is direct and provides a link between the core structure and the TPR-containing nuclear basket of the nuclear pore complex (NPC). Interacts with HIKESHI. Interacts with SENP2. Interacts with XPO5. Interacts with RAN; the interaction occurs in a GTP- and GDP-independent manner. Interacts with MCM3AP; this interaction is required for MCM3AP localization at the nuclear pore complex. Interacts with MAPK1. Zn(2+) serves as cofactor.

It is found in the nucleus. The protein localises to the nucleus membrane. It localises to the nuclear pore complex. Its subcellular location is the nucleoplasm. Functionally, component of the nuclear pore complex (NPC), a complex required for the trafficking across the nuclear envelope. Functions as a scaffolding element in the nuclear phase of the NPC essential for normal nucleocytoplasmic transport of proteins and mRNAs. Involved in the quality control and retention of unspliced mRNAs in the nucleus; in association with TPR, regulates the nuclear export of unspliced mRNA species bearing constitutive transport element (CTE) in a NXF1- and KHDRBS1-independent manner. Mediates TPR anchoring to the nuclear membrane at NPC. The repeat-containing domain may be involved in anchoring other components of the NPC to the pore membrane. Possible DNA-binding subunit of the nuclear pore complex (NPC). This is Nuclear pore complex protein Nup153 (Nup153) from Mus musculus (Mouse).